The following is a 479-amino-acid chain: Glutamate--tRNA ligase (479 aa).

The 'HIGH' region signature appears at 21–31 (PSPTGYLHVGG). Positions 248–252 (KLSKR) match the 'KMSKS' region motif. K251 contacts ATP.

Belongs to the class-I aminoacyl-tRNA synthetase family. Glutamate--tRNA ligase type 1 subfamily. In terms of assembly, monomer.

The protein localises to the cytoplasm. It carries out the reaction tRNA(Glu) + L-glutamate + ATP = L-glutamyl-tRNA(Glu) + AMP + diphosphate. Functionally, catalyzes the attachment of glutamate to tRNA(Glu) in a two-step reaction: glutamate is first activated by ATP to form Glu-AMP and then transferred to the acceptor end of tRNA(Glu). The chain is Glutamate--tRNA ligase from Actinobacillus pleuropneumoniae serotype 5b (strain L20).